A 331-amino-acid chain; its full sequence is MKVTVLAGGVGGARFLLGVQQLLGLGQFAANSAHSDADHQLSAVVNVGDDAWIHGLRVCPDLDTCMYTLGGGVDPQRGWGQRDETWHAMQELVRYGVQPDWFELGDRDLATHLVRTQMLQAGYPLSQITEALCDRWQPGARLLPATDDRCETHVVITDPVDESRKAIHFQEWWVRYRAQVPTHSFAFVGAEKSSAATEAIAALADADIIMLAPSNPVVSIGAILAVPGIRAALREATAPIVGYSPIIGEKPLRGMADTCLSVIGVDSTAAAVGRHYGARCATGILDCWLVHDGDHAEIDGVTVRSVPLLMTDPNATAEMVRAGCDLAGVVA.

Asp-63 contacts 7,8-didemethyl-8-hydroxy-5-deazariboflavin.

The protein belongs to the CofD family. As to quaternary structure, homodimer. Mg(2+) is required as a cofactor.

It catalyses the reaction enolpyruvoyl-2-diphospho-5'-guanosine + 7,8-didemethyl-8-hydroxy-5-deazariboflavin = dehydro coenzyme F420-0 + GMP + H(+). It participates in cofactor biosynthesis; coenzyme F420 biosynthesis. Catalyzes the transfer of the phosphoenolpyruvate moiety from enoylpyruvoyl-2-diphospho-5'-guanosine (EPPG) to 7,8-didemethyl-8-hydroxy-5-deazariboflavin (FO) with the formation of dehydro coenzyme F420-0 and GMP. This is Phosphoenolpyruvate transferase from Mycobacterium bovis (strain ATCC BAA-935 / AF2122/97).